The chain runs to 121 residues: ATP synthase epsilon chain (121 aa).

This sequence belongs to the ATPase epsilon chain family. As to quaternary structure, F-type ATPases have 2 components, CF(1) - the catalytic core - and CF(0) - the membrane proton channel. CF(1) has five subunits: alpha(3), beta(3), gamma(1), delta(1), epsilon(1). CF(0) has three main subunits: a, b and c.

It localises to the cell membrane. In terms of biological role, produces ATP from ADP in the presence of a proton gradient across the membrane. The sequence is that of ATP synthase epsilon chain from Mycobacterium leprae (strain Br4923).